A 563-amino-acid chain; its full sequence is MKLNKMFLVGALLSLGFASCSKEGNGPDPDNAAKSYMSMTLSMPMGSARAGDGQDQANPDYHYVGEWAGKDKIEKVSIYMVPQGGPGLVESAEDLDFGTYYENPTIDPATHNAILKPKKGIKVNSAVGKTVKVYVVLNDIAGKAKALLANVNAADFDAKFKEIIELSTQAQALGTVADGPNPATAAGKIAKKNGTTDETIMMTCLQPSDALTIEAAVSEANAIAGIKNQAKVTVERSVARAMVSTKAQSYEIKATTQIGEIAAGSVLATITDIRWVVAQGERRQYLSKKRGTVPENTWVTPGSGFVPTSSTFHTNATEYYDYAGLWEDHNTNEAVISGTQVPTLADYQLQDVTGELANALSGKFLLPNTHKSGANAASSDYKRGNTAYVLVRAKFTPKKEAFIDRGKTYSDNTAVPEYVAGEDFFVGENGQFYVSMKSVTDPKVGGVAGMKAHKYVKGKVLYYAWLNPSTTSPDSWWNSPVVRNNIYHIHIKSIKKLGFNWNPLVPDPDPSNPENPNNPDPNPDEPGTPVPTDPENPLPDQDTFMSVEVTVLPWKVHSYEVDL.

A signal peptide spans 1-19; the sequence is MKLNKMFLVGALLSLGFAS. Residue Cys-20 is the site of N-palmitoyl cysteine attachment. Cys-20 carries the S-diacylglycerol cysteine lipid modification. The propeptide occupies 20–49; the sequence is CSKEGNGPDPDNAAKSYMSMTLSMPMGSAR. Residues 504–543 form a disordered region; it reads LVPDPDPSNPENPNNPDPNPDEPGTPVPTDPENPLPDQDT. Over residues 505 to 537 the composition is skewed to pro residues; that stretch reads VPDPDPSNPENPNNPDPNPDEPGTPVPTDPENP.

It belongs to the bacteroidetes fimbrillin superfamily. In terms of assembly, structural component of the fimbrial stalk. Minor fimbriae are composed of a structural subunit, most often Mfa1, and the accessory subunits Mfa3, Mfa4 and Mfa5. Mfa1 interacts with Mfa2; this anchors the fimbrium in the membrane. Fimbrium assembly occurs by linear, head-to-tail oligomerization of fimbrial subunits. This is mediated via insertion of a C-terminal beta-strand from one subunit into a groove in the N-terminal domain of the following subunit. Interacts with S.gordonii ssp5.

The protein resides in the fimbrium. It localises to the cell outer membrane. In terms of biological role, structural subunit of the minor fimbriae. These filamentous pili are attached to the cell surface; they mediate biofilm formation, adhesion onto host cells and onto other bacteria that are part of the oral microbiome. They play an important role in invasion of periodontal tissues and are recognized as major virulence factors. Mfa1 orthologs from different strains have highly divergent sequences, and this correlates with pathogenicity. This chain is Minor fimbrium subunit Mfa1, found in Porphyromonas gingivalis (strain ATCC 33277 / DSM 20709 / CIP 103683 / JCM 12257 / NCTC 11834 / 2561).